The primary structure comprises 400 residues: 3-phenylpropionate/cinnamic acid dioxygenase ferredoxin--NAD(+) reductase component (400 aa).

5 to 36 (TIIIVGGGQAAAMAAASLRQQGFTGELHLFSD) serves as a coordination point for FAD. 146-174 (SVVIIGAGTIGLELAASATQRRCKVTVIE) contacts NAD(+).

It belongs to the bacterial ring-hydroxylating dioxygenase ferredoxin reductase family. In terms of assembly, this dioxygenase system consists of four proteins: the two subunits of the hydroxylase component (HcaE and HcaF), a ferredoxin (HcaC) and a ferredoxin reductase (HcaD). The cofactor is FAD.

The enzyme catalyses 2 reduced [2Fe-2S]-[ferredoxin] + NAD(+) + H(+) = 2 oxidized [2Fe-2S]-[ferredoxin] + NADH. It participates in aromatic compound metabolism; 3-phenylpropanoate degradation. In terms of biological role, part of the multicomponent 3-phenylpropionate dioxygenase, that converts 3-phenylpropionic acid (PP) and cinnamic acid (CI) into 3-phenylpropionate-dihydrodiol (PP-dihydrodiol) and cinnamic acid-dihydrodiol (CI-dihydrodiol), respectively. The sequence is that of 3-phenylpropionate/cinnamic acid dioxygenase ferredoxin--NAD(+) reductase component from Escherichia coli (strain K12 / MC4100 / BW2952).